The primary structure comprises 192 residues: MWKRMTAKAEGLYIADTKSFVTKQMDKLDFDYGGIPGDLHFGLTKKAGAREPMFSRGTEIFNRRQISIVSIEECNEIALKMGVPRILPEWLGANVAVSGMPDLTSLKEGSRIIFPSGAALLCEGENDPCIQPGEVIQSYYPDQPKLASAFVRHALGIRGIVCIVERPGAVYTGDEIEVHSYQRKVKRKAERV.

An MOSC domain is found at 15-179 (ADTKSFVTKQ…VYTGDEIEVH (165 aa)).

The sequence is that of Putative metal-sulfur cluster biosynthesis proteins YuaD (yuaD) from Bacillus subtilis (strain 168).